A 365-amino-acid chain; its full sequence is Forkhead box protein E4 (365 aa).

A compositionally biased stretch (basic and acidic residues) spans 1-13 (MDSPDSVRVKCES). Residues 1–46 (MDSPDSVRVKCESKGSCSPEEGLNNGLPEEHNQASGGRRRKRPVQR) form a disordered region. Positions 48–142 (KPPYSYIALI…DNGSFLRRRK (95 aa)) form a DNA-binding region, fork-head.

As to expression, first expressed at the end of gastrulation (stage 13) in the anterior ectodermal placode. During intermediate neural plate stages (stages 14-16), expression expands to the presumptive nasal ectoderm (PNE) and the presumptive lens ectoderm (PLE). By stages 18-21, expression begins to deplete in the PNE, while intensifying in the PLE so that by late neural stages (stages 22), expression is restricted to the PLE. Throughout tailbud stages (stage 23-31), expression is maintained in the lens placode and lens vesicle. In the maturing lens (stage 32-onwards), expression is restricted to the anterior lens epithelium, where it remains during the tadpole stage. In tadpoles there is additional expression in the ventral midline of the pharynx. Expression continues in the adult eye.

The protein resides in the nucleus. Probable transcription factor. Mediates lens formation in the embryo by promoting the proliferation of the specified lens ectoderm and suppressing its terminal differentiation. The polypeptide is Forkhead box protein E4 (Xenopus laevis (African clawed frog)).